The following is a 638-amino-acid chain: RAF proto-oncogene serine/threonine-protein kinase (638 aa).

Ser43 is modified (phosphoserine). The RBD domain occupies 56–130; the sequence is STMRVYLPNK…VGAELQVDFL (75 aa). The Phorbol-ester/DAG-type zinc-finger motif lies at 137-183; that stretch reads THNFVRKTFLKLAFCDICQKFLLNAFRCQTCGYKFHEHCSTKVPTMC. Residues His138, Cys151, Cys154, Cys164, Cys167, His172, Cys175, and Cys183 each coordinate Zn(2+). Ser257 carries the post-translational modification Phosphoserine. Thr266 bears the Phosphothreonine; by autocatalysis mark. Residues 279–323 form a disordered region; it reads LRSHSESGSPNNLSPTGWSNAKAPAPTHREKAASSTGQEKNKIRA. The span at 284 to 297 shows a compositional bias: polar residues; sequence ESGSPNNLSPTGWS. The residue at position 329 (Ser329) is a Phosphoserine. The 261-residue stretch at 340 to 600 folds into the Protein kinase domain; sequence VMLSSRIGSG…PQILSSIELL (261 aa). Residues 346 to 354 and Lys366 contribute to the ATP site; that span reads IGSGSFGTV. Asp459 (proton acceptor) is an active-site residue. Ser490 is subject to Phosphoserine.

Belongs to the protein kinase superfamily. TKL Ser/Thr protein kinase family. RAF subfamily. It depends on Zn(2+) as a cofactor. In terms of processing, phosphorylation at Ser-257 inactivates kinase activity. Dephosphorylation of Ser-257 by a complex containing protein phosphatase 1 relieves inactivation, leading to stimulate RAF1 activity.

Its subcellular location is the cytoplasm. The protein localises to the cell membrane. It catalyses the reaction L-seryl-[protein] + ATP = O-phospho-L-seryl-[protein] + ADP + H(+). It carries out the reaction L-threonyl-[protein] + ATP = O-phospho-L-threonyl-[protein] + ADP + H(+). Its function is as follows. Serine/threonine-protein kinase that acts as a regulatory link between the membrane-associated Ras GTPases and the MAPK/ERK cascade, and this critical regulatory link functions as a switch determining cell fate decisions. RAF1 activation initiates a mitogen-activated protein kinase (MAPK) cascade that comprises a sequential phosphorylation of the dual-specific MAPK kinases (MAP2K1/MEK1 and MAP2K2/MEK2) and the extracellular signal-regulated kinases (MAPK3/ERK1 and MAPK1/ERK2). The sequence is that of RAF proto-oncogene serine/threonine-protein kinase (raf1) from Xenopus laevis (African clawed frog).